We begin with the raw amino-acid sequence, 304 residues long: D-alanine--D-alanine ligase (304 aa).

The 197-residue stretch at 103–299 (KLIWQALGLP…FADLCIEILK (197 aa)) folds into the ATP-grasp domain. An ATP-binding site is contributed by 129–184 (EEKLGLPMFVKPAAEGSSVGVVKVKGKGRLKSVYEELKHLQGEIIAERFIGGGEYS). Positions 253, 266, and 268 each coordinate Mg(2+).

The protein belongs to the D-alanine--D-alanine ligase family. Mg(2+) is required as a cofactor. The cofactor is Mn(2+).

It is found in the cytoplasm. It carries out the reaction 2 D-alanine + ATP = D-alanyl-D-alanine + ADP + phosphate + H(+). The protein operates within cell wall biogenesis; peptidoglycan biosynthesis. Cell wall formation. This chain is D-alanine--D-alanine ligase, found in Neisseria meningitidis serogroup C / serotype 2a (strain ATCC 700532 / DSM 15464 / FAM18).